Here is a 116-residue protein sequence, read N- to C-terminus: Large ribosomal subunit protein bL20 (116 aa).

This sequence belongs to the bacterial ribosomal protein bL20 family.

Functionally, binds directly to 23S ribosomal RNA and is necessary for the in vitro assembly process of the 50S ribosomal subunit. It is not involved in the protein synthesizing functions of that subunit. The polypeptide is Large ribosomal subunit protein bL20 (rplT) (Mycoplasmopsis fermentans (Mycoplasma fermentans)).